The sequence spans 207 residues: Holliday junction branch migration complex subunit RuvA (207 aa).

The segment at 1–71 is domain I; that stretch reads MIVSIAGKLV…RLTPRLIGFS (71 aa). Positions 72–149 are domain II; sequence TLPERQFFDL…RFALMVAGGE (78 aa). Residues 150-155 are flexible linker; the sequence is VADAME. The segment at 156–207 is domain III; that stretch reads VESPIVSDTYDALVTLGHSESDARKLIDETLATGKKFKDTESLLTAIYQRSK.

This sequence belongs to the RuvA family. As to quaternary structure, homotetramer. Forms an RuvA(8)-RuvB(12)-Holliday junction (HJ) complex. HJ DNA is sandwiched between 2 RuvA tetramers; dsDNA enters through RuvA and exits via RuvB. An RuvB hexamer assembles on each DNA strand where it exits the tetramer. Each RuvB hexamer is contacted by two RuvA subunits (via domain III) on 2 adjacent RuvB subunits; this complex drives branch migration. In the full resolvosome a probable DNA-RuvA(4)-RuvB(12)-RuvC(2) complex forms which resolves the HJ.

It is found in the cytoplasm. The RuvA-RuvB-RuvC complex processes Holliday junction (HJ) DNA during genetic recombination and DNA repair, while the RuvA-RuvB complex plays an important role in the rescue of blocked DNA replication forks via replication fork reversal (RFR). RuvA specifically binds to HJ cruciform DNA, conferring on it an open structure. The RuvB hexamer acts as an ATP-dependent pump, pulling dsDNA into and through the RuvAB complex. HJ branch migration allows RuvC to scan DNA until it finds its consensus sequence, where it cleaves and resolves the cruciform DNA. This is Holliday junction branch migration complex subunit RuvA from Rhodopirellula baltica (strain DSM 10527 / NCIMB 13988 / SH1).